Consider the following 529-residue polypeptide: Bifunctional purine biosynthesis protein PurH (529 aa).

The MGS-like domain maps to 1–148 (MNNVRPIRRA…KNHKDTTIVV (148 aa)).

Belongs to the PurH family.

The enzyme catalyses (6R)-10-formyltetrahydrofolate + 5-amino-1-(5-phospho-beta-D-ribosyl)imidazole-4-carboxamide = 5-formamido-1-(5-phospho-D-ribosyl)imidazole-4-carboxamide + (6S)-5,6,7,8-tetrahydrofolate. It catalyses the reaction IMP + H2O = 5-formamido-1-(5-phospho-D-ribosyl)imidazole-4-carboxamide. It participates in purine metabolism; IMP biosynthesis via de novo pathway; 5-formamido-1-(5-phospho-D-ribosyl)imidazole-4-carboxamide from 5-amino-1-(5-phospho-D-ribosyl)imidazole-4-carboxamide (10-formyl THF route): step 1/1. The protein operates within purine metabolism; IMP biosynthesis via de novo pathway; IMP from 5-formamido-1-(5-phospho-D-ribosyl)imidazole-4-carboxamide: step 1/1. The sequence is that of Bifunctional purine biosynthesis protein PurH from Shewanella frigidimarina (strain NCIMB 400).